The following is a 1286-amino-acid chain: MRRLICKRICDYKSFDDEESVDGNRPSSAASAFKVPAPKTPGNPVNSARKPGSAGGPKAGGTSKEGGAGAVDEDDFIKAFTDVPSIQIYSSRELEETLNKIREILSDDKHDWDQRANALKKIRSLLVAGAAQYDCFFQHLRLLDGALKLSAKDLRSQVVREACITVAHLSTVLGNKFDHGAEAIVPTLFNLVPNSAKVMATSGCAAIRFIIRHTHVPRLIPLITSNCTSKSVPVRRRSFEFLDLLLQEWQTHSLERHAAVLVETIKKGIHDADAEARVEARKTYMGLRNHFPGEAETLYNSLEPSYQKSLQTYLKSSGSVASLPQSDRSSSSSQESLNRPFSSKWSTANPSAVAGRVSVGGSKASPLPGSLQRSRSDIDVNAAAGAKAHHAAGQAVRSGRLGAGALNPGSYASLEDTSDKMDGTASEDGRVRAKLSTPLVAVGNAKTDSRGRSRTKMVSQSQPGSRSGSPGRVLTTTALSTVSSGAQRILVNSASAQKRSKIPRSQGCSREASPSRLSVARSSRIPRPSVSQGCSREASRESSRDTSPVRSFQPLGPGYGMSQSSRLSSSVSAMRVLNTGSDVEEAVADALLLGDIRTKKKPARRRYESYGMHSDDDANSDASSACSERSYSSRNGSIPTYMRQTEDVAEVLNRCASSNWSERKEGLLGLQNLLKNQRTLSRVELKRLCEIFTRMFADPHGKVFSMFLETLVDFIQVHKDDLQDWLFVLLTQLLKKMGADLLGSVQAKVQKALDVTRESFPNDLQFNILMRFTVDQTQTPSLKVKVAILKYIETLAKQMDPGDFINSSETRLAVSRVITWTTEPKSSDVRKAAQSVLISLFELNTPEFTMLLGALPKTFQDGATKLLHNHLRNTGNGTQSSMGSPLTRPTPRSPANWSSPLTSPTNTSQNTLSPSAFDYDTENMNSEDIYSSLRGVTEAIQNFSFRSQEDMSEPLKRDPKKEDGDTVCSGPGMSDPRAGGDAPDSSQPALDNKASLLHSVPLHSSPRSRDYNPYNYSDSISPFNKSALKEAMFDDDADQFPDDLSLDHSDLVAELLKELSNHNERIEERKIALYELMKLTQEESFSVWDEHFKTILLLLLETLGDKEPTIRALALKVLKEILRHQPARFKNYAELTVMKTLEAHKDPHKEVVRSAEEAASVLATSISPEQCIKVLCPIIQTADYPINLAAIKMQTKVIERVSKETLNLLLPEIMPGLIQGYDNSESSVRKACVFCLVAVHAVIGDELKPHLSQLTGSKMKLLNLYIKRAQTGSAGADPTTDVSGQS.

The interval 1 to 40 (MRRLICKRICDYKSFDDEESVDGNRPSSAASAFKVPAPKT) is golgi localization. Serine 14 and serine 20 each carry phosphoserine. Positions 17–70 (DEESVDGNRPSSAASAFKVPAPKTPGNPVNSARKPGSAGGPKAGGTSKEGGAGA) are disordered. Residues 53-69 (SAGGPKAGGTSKEGGAG) are compositionally biased toward gly residues. The segment at 66 to 317 (GGAGAVDEDD…KSLQTYLKSS (252 aa)) is TOG 1. HEAT repeat units lie at residues 179 to 214 (HGAE…IRHT), 215 to 251 (HVPR…EWQT), and 256 to 293 (RHAA…HFPG). 2 disordered regions span residues 320-350 (VASL…TANP) and 355-374 (GRVS…LQRS). Phosphoserine occurs at positions 322, 333, and 336. Residues 322 to 340 (SLPQSDRSSSSSQESLNRP) show a composition bias toward low complexity. Residues 341-350 (FSSKWSTANP) are compositionally biased toward polar residues. 3 positions are modified to phosphoserine: serine 374, serine 376, and serine 413. The segment at 410–473 (SYASLEDTSD…GSRSGSPGRV (64 aa)) is disordered. A compositionally biased stretch (basic and acidic residues) spans 417–431 (TSDKMDGTASEDGRV). The tract at residues 450-565 (RGRSRTKMVS…GPGYGMSQSS (116 aa)) is interaction with microtubules, MAPRE1 and MAPRE3. Over residues 459–473 (SQSQPGSRSGSPGRV) the composition is skewed to low complexity. Phosphoserine occurs at positions 461, 465, 469, 484, and 495. The disordered stretch occupies residues 492–566 (NSASAQKRSK…PGYGMSQSSR (75 aa)). The SXIP motif 1; mediates interaction with MAPRE1 and targeting to microtubule plus ends motif lies at 500–503 (SKIP). Serine 513 carries the phosphoserine modification. The SXIP motif 2; mediates interaction with MAPRE1 and targeting to microtubule plus ends motif lies at 523–526 (SRIP). A phosphoserine mark is found at serine 531, serine 535, serine 570, serine 572, serine 581, serine 614, and serine 620. Positions 606 to 616 (RYESYGMHSDD) are enriched in basic and acidic residues. Residues 606 to 638 (RYESYGMHSDDDANSDASSACSERSYSSRNGSI) are disordered. Residues 620 to 634 (SDASSACSERSYSSR) show a composition bias toward low complexity. A TOG 2 region spans residues 642–873 (MRQTEDVAEV…TKLLHNHLRN (232 aa)). HEAT repeat units lie at residues 702 to 739 (KVFS…KMGA) and 764 to 801 (LQFN…QMDP). Threonine 779 carries the post-translational modification Phosphothreonine. The interval 864 to 1286 (TKLLHNHLRN…DPTTDVSGQS (423 aa)) is interaction with RSN and localization to the Golgi and kinetochores. Disordered regions lie at residues 870-920 (HLRN…FDYD) and 944-990 (SFRS…QPAL). Polar residues-rich tracts occupy residues 872-884 (RNTG…SMGS) and 893-914 (SPAN…TLSP). The residue at position 884 (serine 884) is a Phosphoserine. Residues serine 944, serine 947, serine 1005, and serine 1021 each carry the phosphoserine modification. A compositionally biased stretch (basic and acidic residues) spans 947 to 964 (SQEDMSEPLKRDPKKEDG). The required for cortical localization stretch occupies residues 1009-1286 (RDYNPYNYSD…DPTTDVSGQS (278 aa)). HEAT repeat units follow at residues 1046 to 1083 (LDHS…TQEE), 1090 to 1127 (EHFK…HQPA), and 1208 to 1245 (LLLP…VIGD).

This sequence belongs to the CLASP family. As to quaternary structure, interacts with microtubules. Interacts with MAPRE1; probably required for targeting to the growing microtubule plus ends. Interacts with CLIP2, ERC1, MAPRE3, PHLDB2 and RSN. The interaction with ERC1 may be mediated by PHLDB2. Interacts with GCC2; recruits CLASP2 to Golgi membranes. Interacts with MACF1. Interacts with SOGA1 and MTCL1. Phosphorylated by GSK3B. Phosphorylation by GSK3B may negatively regulate binding to microtubule lattices in lamella.

The protein localises to the cytoplasm. It localises to the cytoskeleton. Its subcellular location is the microtubule organizing center. It is found in the centrosome. The protein resides in the chromosome. The protein localises to the centromere. It localises to the kinetochore. Its subcellular location is the spindle. It is found in the golgi apparatus. The protein resides in the trans-Golgi network. The protein localises to the cell membrane. It localises to the cell projection. Its subcellular location is the ruffle membrane. It is found in the cell cortex. Microtubule plus-end tracking protein that promotes the stabilization of dynamic microtubules. Involved in the nucleation of noncentrosomal microtubules originating from the trans-Golgi network (TGN). Required for the polarization of the cytoplasmic microtubule arrays in migrating cells towards the leading edge of the cell. May act at the cell cortex to enhance the frequency of rescue of depolymerizing microtubules by attaching their plus-ends to cortical platforms composed of ERC1 and PHLDB2. This cortical microtubule stabilizing activity is regulated at least in part by phosphatidylinositol 3-kinase signaling. Also performs a similar stabilizing function at the kinetochore which is essential for the bipolar alignment of chromosomes on the mitotic spindle. Acts as a mediator of ERBB2-dependent stabilization of microtubules at the cell cortex. In Rattus norvegicus (Rat), this protein is CLIP-associating protein 2 (Clasp2).